The sequence spans 136 residues: Sec-independent protein translocase protein TatB (136 aa).

The chain crosses the membrane as a helical span at residues 1–21; it reads MFDIGFWELVLISVIGLVVLG. Residues 66 to 136 are disordered; it reads ASKQGLSDLD…TTPPRQDKNE (71 aa). Composition is skewed to basic and acidic residues over residues 77 to 89 and 96 to 107; these read ELQK…KETA and YKKDIDDIKTSL. Polar residues predominate over residues 108–130; that stretch reads DKNPSGTTQQENSILDSSKTTPP.

This sequence belongs to the TatB family. The Tat system comprises two distinct complexes: a TatABC complex, containing multiple copies of TatA, TatB and TatC subunits, and a separate TatA complex, containing only TatA subunits. Substrates initially bind to the TatABC complex, which probably triggers association of the separate TatA complex to form the active translocon.

It localises to the cell inner membrane. Its function is as follows. Part of the twin-arginine translocation (Tat) system that transports large folded proteins containing a characteristic twin-arginine motif in their signal peptide across membranes. Together with TatC, TatB is part of a receptor directly interacting with Tat signal peptides. TatB may form an oligomeric binding site that transiently accommodates folded Tat precursor proteins before their translocation. This Psychromonas ingrahamii (strain DSM 17664 / CCUG 51855 / 37) protein is Sec-independent protein translocase protein TatB.